The sequence spans 89 residues: Small ribosomal subunit protein uS14 (89 aa).

Belongs to the universal ribosomal protein uS14 family. Part of the 30S ribosomal subunit. Contacts proteins S3 and S10.

Its function is as follows. Binds 16S rRNA, required for the assembly of 30S particles and may also be responsible for determining the conformation of the 16S rRNA at the A site. This Exiguobacterium sibiricum (strain DSM 17290 / CCUG 55495 / CIP 109462 / JCM 13490 / 255-15) protein is Small ribosomal subunit protein uS14.